The sequence spans 158 residues: Small ribosomal subunit protein uS17 (158 aa).

Ala-2 is subject to N-acetylalanine. The residue at position 22 (Arg-22) is a Citrulline. Lys-38, Lys-45, and Lys-58 each carry N6-acetyllysine. A lipid anchor (S-palmitoyl cysteine) is attached at Cys-60. At Ser-67 the chain carries Phosphoserine. Residue Arg-69 is modified to Omega-N-methylarginine. Ser-110 bears the Phosphoserine mark.

Belongs to the universal ribosomal protein uS17 family. Component of the small ribosomal subunit. Part of the small subunit (SSU) processome, composed of more than 70 proteins and the RNA chaperone small nucleolar RNA (snoRNA) U3. In terms of processing, citrullinated by PADI4.

The protein localises to the cytoplasm. It localises to the nucleus. It is found in the nucleolus. In terms of biological role, component of the small ribosomal subunit. The ribosome is a large ribonucleoprotein complex responsible for the synthesis of proteins in the cell. Part of the small subunit (SSU) processome, first precursor of the small eukaryotic ribosomal subunit. During the assembly of the SSU processome in the nucleolus, many ribosome biogenesis factors, an RNA chaperone and ribosomal proteins associate with the nascent pre-rRNA and work in concert to generate RNA folding, modifications, rearrangements and cleavage as well as targeted degradation of pre-ribosomal RNA by the RNA exosome. This is Small ribosomal subunit protein uS17 (Rps11) from Mus musculus (Mouse).